The primary structure comprises 691 residues: Elongation factor G (691 aa).

The tr-type G domain occupies 8-282; sequence ERVRNIGIAA…AVVDYLPAPV (275 aa). GTP-binding positions include 17–24, 81–85, and 135–138; these read AHIDAGKT, DTPGH, and NKMD.

It belongs to the TRAFAC class translation factor GTPase superfamily. Classic translation factor GTPase family. EF-G/EF-2 subfamily.

It localises to the cytoplasm. Catalyzes the GTP-dependent ribosomal translocation step during translation elongation. During this step, the ribosome changes from the pre-translocational (PRE) to the post-translocational (POST) state as the newly formed A-site-bound peptidyl-tRNA and P-site-bound deacylated tRNA move to the P and E sites, respectively. Catalyzes the coordinated movement of the two tRNA molecules, the mRNA and conformational changes in the ribosome. The polypeptide is Elongation factor G (Prochlorococcus marinus (strain MIT 9303)).